Reading from the N-terminus, the 36-residue chain is Cytochrome b6-f complex subunit 7 (36 aa).

A helical transmembrane segment spans residues 5-25; sequence IFFVAGLVFVLTLVGMAIGFG.

This sequence belongs to the PetM family. The 4 large subunits of the cytochrome b6-f complex are cytochrome b6, subunit IV (17 kDa polypeptide, PetD), cytochrome f and the Rieske protein, while the 4 small subunits are PetG, PetL, PetM and PetN. The complex functions as a dimer.

Its subcellular location is the cell inner membrane. Functionally, component of the cytochrome b6-f complex, which mediates electron transfer between photosystem II (PSII) and photosystem I (PSI), cyclic electron flow around PSI, and state transitions. This Gloeobacter violaceus (strain ATCC 29082 / PCC 7421) protein is Cytochrome b6-f complex subunit 7.